The chain runs to 89 residues: Small ribosomal subunit protein uS15 (89 aa).

This sequence belongs to the universal ribosomal protein uS15 family. In terms of assembly, part of the 30S ribosomal subunit. Forms a bridge to the 50S subunit in the 70S ribosome, contacting the 23S rRNA.

One of the primary rRNA binding proteins, it binds directly to 16S rRNA where it helps nucleate assembly of the platform of the 30S subunit by binding and bridging several RNA helices of the 16S rRNA. In terms of biological role, forms an intersubunit bridge (bridge B4) with the 23S rRNA of the 50S subunit in the ribosome. The sequence is that of Small ribosomal subunit protein uS15 from Frankia casuarinae (strain DSM 45818 / CECT 9043 / HFP020203 / CcI3).